A 153-amino-acid chain; its full sequence is Aspartate carbamoyltransferase regulatory chain (153 aa).

Zn(2+) contacts are provided by Cys-109, Cys-114, Cys-138, and Cys-141.

It belongs to the PyrI family. In terms of assembly, contains catalytic and regulatory chains. Zn(2+) is required as a cofactor.

Its function is as follows. Involved in allosteric regulation of aspartate carbamoyltransferase. The chain is Aspartate carbamoyltransferase regulatory chain from Shigella dysenteriae serotype 1 (strain Sd197).